The primary structure comprises 325 residues: Histone-lysine N-methyltransferase ATXR4 (325 aa).

The first 30 residues, 1-30 (MSRLALNRYSRCFSRLKTLTTPLFFSSSAA), serve as a signal peptide directing secretion. Positions 42 to 295 (PPIRVGLTES…EGEELRICYI (254 aa)) constitute an SET domain.

This sequence belongs to the class V-like SAM-binding methyltransferase superfamily. Histone-lysine methyltransferase family. TRX/MLL subfamily.

The protein resides in the nucleus. It catalyses the reaction L-lysyl-[histone] + S-adenosyl-L-methionine = N(6)-methyl-L-lysyl-[histone] + S-adenosyl-L-homocysteine + H(+). In terms of biological role, histone methyltransferase. The chain is Histone-lysine N-methyltransferase ATXR4 (ATXR4) from Arabidopsis thaliana (Mouse-ear cress).